A 150-amino-acid polypeptide reads, in one-letter code: Transcriptional repressor NrdR (150 aa).

Residues 1–26 (MKCPFCGNSDSKVVDSRPDKGGSGIR) form a disordered region. Residues 3 to 34 (CPFCGNSDSKVVDSRPDKGGSGIRRRRECEQC) fold into a zinc finger. The 91-residue stretch at 49 to 139 (PLVLKKDGRR…VYRSFRDINE (91 aa)) folds into the ATP-cone domain.

The protein belongs to the NrdR family. The cofactor is Zn(2+).

Negatively regulates transcription of bacterial ribonucleotide reductase nrd genes and operons by binding to NrdR-boxes. In Pelobacter propionicus (strain DSM 2379 / NBRC 103807 / OttBd1), this protein is Transcriptional repressor NrdR.